Here is a 230-residue protein sequence, read N- to C-terminus: Uracil-DNA glycosylase (230 aa).

Catalysis depends on D70, which acts as the Proton acceptor.

It belongs to the uracil-DNA glycosylase (UDG) superfamily. UNG family.

It is found in the cytoplasm. The catalysed reaction is Hydrolyzes single-stranded DNA or mismatched double-stranded DNA and polynucleotides, releasing free uracil.. Excises uracil residues from the DNA which can arise as a result of misincorporation of dUMP residues by DNA polymerase or due to deamination of cytosine. This chain is Uracil-DNA glycosylase, found in Pseudomonas savastanoi pv. phaseolicola (strain 1448A / Race 6) (Pseudomonas syringae pv. phaseolicola (strain 1448A / Race 6)).